The chain runs to 226 residues: MNPILINRLQRKLGYTFQQYELLLQALTHRSASSKHNERLEFLGDSILSFVIANALYHRFPKVDEGDMSRMRATLVRGNTLAEIAREFELGECLRLGPGELKSGGFRRESILADTVEALIGGIFLDSDIQTIERLILNWYQTRLDEISPGDKQKDPKTRLQEFLQGRHLPLPTYLVVQVRGEAHDQEFTIHCQVSGFSESVIGTGSSRRKAEQAAAEQALKKLELE.

The region spanning 6–128 is the RNase III domain; that stretch reads INRLQRKLGY…LIGGIFLDSD (123 aa). Glu-41 is a binding site for Mg(2+). Asp-45 is an active-site residue. Residues Asp-114 and Glu-117 each contribute to the Mg(2+) site. Glu-117 is a catalytic residue. A DRBM domain is found at 155–225; it reads DPKTRLQEFL…AEQALKKLEL (71 aa).

Belongs to the ribonuclease III family. As to quaternary structure, homodimer. Mg(2+) serves as cofactor.

Its subcellular location is the cytoplasm. The enzyme catalyses Endonucleolytic cleavage to 5'-phosphomonoester.. Its function is as follows. Digests double-stranded RNA. Involved in the processing of primary rRNA transcript to yield the immediate precursors to the large and small rRNAs (23S and 16S). Processes some mRNAs, and tRNAs when they are encoded in the rRNA operon. Processes pre-crRNA and tracrRNA of type II CRISPR loci if present in the organism. The sequence is that of Ribonuclease 3 from Pectobacterium carotovorum subsp. carotovorum (strain PC1).